We begin with the raw amino-acid sequence, 144 residues long: Large ribosomal subunit protein uL13 (144 aa).

Belongs to the universal ribosomal protein uL13 family. As to quaternary structure, part of the 50S ribosomal subunit.

Functionally, this protein is one of the early assembly proteins of the 50S ribosomal subunit, although it is not seen to bind rRNA by itself. It is important during the early stages of 50S assembly. This chain is Large ribosomal subunit protein uL13, found in Buchnera aphidicola subsp. Baizongia pistaciae (strain Bp).